A 367-amino-acid chain; its full sequence is Tetraacyldisaccharide 4'-kinase (367 aa).

Residue 68–75 participates in ATP binding; that stretch reads VLGGSGKT.

It belongs to the LpxK family.

It catalyses the reaction a lipid A disaccharide + ATP = a lipid IVA + ADP + H(+). The protein operates within glycolipid biosynthesis; lipid IV(A) biosynthesis; lipid IV(A) from (3R)-3-hydroxytetradecanoyl-[acyl-carrier-protein] and UDP-N-acetyl-alpha-D-glucosamine: step 6/6. In terms of biological role, transfers the gamma-phosphate of ATP to the 4'-position of a tetraacyldisaccharide 1-phosphate intermediate (termed DS-1-P) to form tetraacyldisaccharide 1,4'-bis-phosphate (lipid IVA). The protein is Tetraacyldisaccharide 4'-kinase of Chlamydia abortus (strain DSM 27085 / S26/3) (Chlamydophila abortus).